We begin with the raw amino-acid sequence, 594 residues long: P-granule-associated novel protein 1 (594 aa).

A signal peptide spans 1–18 (MRSLLSFVLLALARIAIS). The Extracellular portion of the chain corresponds to 19-513 (EETKSCIDIE…PEEEEVYRSG (495 aa)). LRR repeat units follow at residues 78–101 (GTEL…LFEN), 103–124 (FAKQ…SFQS), 125–149 (LGGS…LFTG), 150–173 (LKSL…AFEE), 175–197 (KKVE…TFDG), 198–221 (MKNL…AFRG), 222–245 (LNSL…IFSA), 246–269 (LKNL…SFPK), 271–290 (EKLV…KLKD), 291–315 (LPSL…MFGL), 318–341 (SDRI…AFQH), 343–365 (PNLI…SPSQ), 374–397 (LKKL…ELPK), 399–419 (LSSL…ALEG), and 420–442 (MEIK…TFDS). Residues 514-534 (WITVAATILTIVTIVIMVIIA) form a helical membrane-spanning segment. The Cytoplasmic segment spans residues 535–594 (MLYFKDARYQFPLRGRRSDSDLHKLIENDPLNIASDSILVVPAMPKRNTGPKKTVRFQNF).

In terms of assembly, interacts with glh-1. Interacts (via LRR regions) with myrf-1 (via C-terminus); the interaction promotes the role of myrf-1 in the synaptic remodeling of DD GABAergic motor neurons at the cell membrane. Expressed in the germline and somatic cells. As to expression, expressed in the germline and somatic cells. Expressed at higher levels in germline cells relative to somatic cells. In terms of tissue distribution, expressed in germline cells. Highly expressed in the pharynx and at lower levels in the intestine, but not detected in other tissues. Other studies suggest a broader expression pattern in somatic tissues: from embryogenesis to adult stages, expressed strongly in body wall muscle, vulva, somatic gonad and pharynx, at lower levels in the nerve ring, hypodermis, and rectal epithelia, and very weakly in the intestine.

The protein resides in the cytoplasm. Its subcellular location is the apical cell membrane. In terms of biological role, regulates diverse developmental processes including larval molting and gonad maturation. Its function is as follows. Promotes the localization of myrf-1 and myrf-2 to the cell membrane. In association with myrf-1, promotes the synaptic remodeling of DD GABAergic motor neurons whereby new synapses form in the dorsal processes of DD neurons. The chain is P-granule-associated novel protein 1 from Caenorhabditis elegans.